The following is a 1902-amino-acid chain: PI-type proteinase (1902 aa).

An N-terminal signal peptide occupies residues 1-33 (MQRKKKGLSILLAGTVALGALAVLPVGEIQAKA). Positions 34-187 (AISQQTKGSS…VTLAKVYYPT (154 aa)) are excised as a propeptide. One can recognise a Peptidase S8 domain in the interval 191 to 697 (ANSMANVQAV…AGLVDVKAAI (507 aa)). Residues aspartate 217, histidine 281, and serine 620 each act as charge relay system in the active site. The tract at residues 1796–1874 (GKGDGTTGTS…GALPKTGETT (79 aa)) is disordered. Positions 1797-1812 (KGDGTTGTSDKGGGQG) are enriched in gly residues. The segment covering 1830–1843 (SQPSSGGNIPTNPA) has biased composition (polar residues). The LPXTG sorting signal signature appears at 1867 to 1871 (LPKTG). Position 1870 is a pentaglycyl murein peptidoglycan amidated threonine (threonine 1870). A propeptide spans 1871-1902 (GETTERPAFGFLGVIVVILMGVLGLKRKQREE) (removed by sortase).

The protein belongs to the peptidase S8 family.

It localises to the secreted. It is found in the cell wall. The enzyme catalyses Endopeptidase activity with very broad specificity, although some subsite preference have been noted, e.g. large hydrophobic residues in the P1 and P4 positions, and Pro in the P2 position. Best known for its action on caseins, although it has been shown to hydrolyze hemoglobin and oxidized insulin B-chain.. Functionally, protease which breaks down milk proteins during the growth of the bacteria on milk. The protein is PI-type proteinase (prtP) of Lactococcus lactis subsp. cremoris (Streptococcus cremoris).